A 237-amino-acid chain; its full sequence is Uridylate kinase (237 aa).

12–15 lines the ATP pocket; sequence KLSG. The tract at residues 20–25 is involved in allosteric activation by GTP; sequence GAEGFG. Gly54 provides a ligand contact to UMP. ATP contacts are provided by Gly55 and Arg59. UMP contacts are provided by residues Asp74 and 135 to 142; that span reads TGSPFFTT. Thr162, Tyr168, and Asp171 together coordinate ATP.

Belongs to the UMP kinase family. Homohexamer.

It is found in the cytoplasm. The catalysed reaction is UMP + ATP = UDP + ADP. Its pathway is pyrimidine metabolism; CTP biosynthesis via de novo pathway; UDP from UMP (UMPK route): step 1/1. Allosterically activated by GTP. Inhibited by UTP. Catalyzes the reversible phosphorylation of UMP to UDP. This is Uridylate kinase from Actinobacillus succinogenes (strain ATCC 55618 / DSM 22257 / CCUG 43843 / 130Z).